The primary structure comprises 313 residues: uncharacterized protein (313 aa).

2 disordered regions span residues 24-53 and 190-291; these read EEGE…PTPN and TALS…PCAR. The span at 211–229 shows a compositional bias: polar residues; the sequence is TQNYVLKLQLSSPNSQPMS. Over residues 239–260 the composition is skewed to low complexity; that stretch reads SCSSSNCSSSSSSSACSSVSIS. The segment covering 261–284 has biased composition (polar residues); that stretch reads DPNNITAYETNNVNPQFPSNQPLD.

This is an uncharacterized protein from Saccharomyces cerevisiae (strain ATCC 204508 / S288c) (Baker's yeast).